A 373-amino-acid polypeptide reads, in one-letter code: Saccharopine dehydrogenase [NAD(+), L-lysine-forming] (373 aa).

Alanine 2 is modified (N-acetylalanine; partial). 2 residues coordinate L-saccharopine: arginine 18 and lysine 77. Lysine 77 functions as the Proton acceptor in the catalytic mechanism. The Proton donor role is filled by histidine 96. Glutamine 101 provides a ligand contact to L-saccharopine. Arginine 130 contributes to the NAD(+) binding site. Arginine 131 and phenylalanine 135 together coordinate L-saccharopine. Residues glycine 203 to arginine 204, aspartate 227, threonine 231, tyrosine 251, and valine 278 contribute to the NAD(+) site. An intrachain disulfide couples cysteine 205 to cysteine 249. An L-saccharopine-binding site is contributed by serine 279 to aspartate 281. Residue isoleucine 318–leucine 321 coordinates NAD(+). The Microbody targeting signal motif lies at serine 371 to leucine 373.

Belongs to the AlaDH/PNT family. As to quaternary structure, monomer.

The protein resides in the peroxisome. It catalyses the reaction L-saccharopine + NAD(+) + H2O = L-lysine + 2-oxoglutarate + NADH + H(+). Its pathway is amino-acid biosynthesis; L-lysine biosynthesis via AAA pathway; L-lysine from L-alpha-aminoadipate (fungal route): step 3/3. Its activity is regulated as follows. Inhibited by p-chloromercuribenzoate and iodoacetate by modification of the active site cysteine residue. Inhibited by diethyl pyrocarbonate by modification of histidine residues. Inhibited by pyridoxal 5'-phosphate by modification of an essential lysine residue. Catalyzes the NAD(+)-dependent cleavage of saccharopine to L-lysine and 2-oxoglutarate, the final step in the alpha-aminoadipate (AAA) pathway for lysine biosynthesis. This Saccharomyces cerevisiae (strain ATCC 204508 / S288c) (Baker's yeast) protein is Saccharopine dehydrogenase [NAD(+), L-lysine-forming].